A 326-amino-acid polypeptide reads, in one-letter code: Cytosolic Fe-S cluster assembly factor NBP35 (326 aa).

The interval 1 to 38 is disordered; sequence MTEIANGQQILPPDYTLKEPEPEHCPGPESENAGKGDS. Residues 16-26 are compositionally biased toward basic and acidic residues; that stretch reads TLKEPEPEHCP. [4Fe-4S] cluster is bound by residues C25, C39, C42, and C48. 78-85 serves as a coordination point for ATP; that stretch reads GKGGVGKS. Residues C251 and C254 each coordinate [4Fe-4S] cluster.

This sequence belongs to the Mrp/NBP35 ATP-binding proteins family. NUBP1/NBP35 subfamily. As to quaternary structure, heterotetramer of 2 NBP35 and 2 CFD1 chains. [4Fe-4S] cluster serves as cofactor.

Its subcellular location is the cytoplasm. The protein resides in the nucleus. Functionally, component of the cytosolic iron-sulfur (Fe/S) protein assembly (CIA) machinery. Required for maturation of extramitochondrial Fe-S proteins. The NBP35-CFD1 heterotetramer forms a Fe-S scaffold complex, mediating the de novo assembly of an Fe-S cluster and its transfer to target apoproteins. Required for biogenesis and export of both ribosomal subunits, which may reflect a role in assembly of the Fe/S clusters in RLI1, a protein which performs rRNA processing and ribosome export. The polypeptide is Cytosolic Fe-S cluster assembly factor NBP35 (Kluyveromyces lactis (strain ATCC 8585 / CBS 2359 / DSM 70799 / NBRC 1267 / NRRL Y-1140 / WM37) (Yeast)).